The following is a 400-amino-acid chain: Phosphoglycerate kinase (400 aa).

Residues 22–24 (DFN), Arg38, 61–64 (HLGR), Arg119, and Arg152 each bind substrate. Residues Lys205, Gly296, Glu327, and 353–356 (GGDT) each bind ATP.

Belongs to the phosphoglycerate kinase family. In terms of assembly, monomer.

Its subcellular location is the cytoplasm. The enzyme catalyses (2R)-3-phosphoglycerate + ATP = (2R)-3-phospho-glyceroyl phosphate + ADP. The protein operates within carbohydrate degradation; glycolysis; pyruvate from D-glyceraldehyde 3-phosphate: step 2/5. The chain is Phosphoglycerate kinase from Campylobacter jejuni subsp. jejuni serotype O:23/36 (strain 81-176).